The following is a 364-amino-acid chain: sn-glycerol-3-phosphate import ATP-binding protein UgpC (364 aa).

The region spanning 4-235 (VVLRNVRKTY…PATTFVASFI (232 aa)) is the ABC transporter domain. 37–44 (GPSGCGKS) is a binding site for ATP.

Belongs to the ABC transporter superfamily. sn-glycerol-3-phosphate importer (TC 3.A.1.1.3) family. In terms of assembly, the complex is composed of two ATP-binding proteins (UgpC), two transmembrane proteins (UgpA and UgpE) and a solute-binding protein (UgpB).

The protein localises to the cell inner membrane. The enzyme catalyses sn-glycerol 3-phosphate(out) + ATP + H2O = sn-glycerol 3-phosphate(in) + ADP + phosphate + H(+). Part of the ABC transporter complex UgpBAEC involved in sn-glycerol-3-phosphate (G3P) import. Responsible for energy coupling to the transport system. This is sn-glycerol-3-phosphate import ATP-binding protein UgpC from Rhodopseudomonas palustris (strain HaA2).